A 222-amino-acid chain; its full sequence is Salivary anticoagulant protein P23 (222 aa).

The N-terminal stretch at 1–17 (MLTVSLLTLSLAAYASA) is a signal peptide. Asn56, Asn73, Asn109, and Asn114 each carry an N-linked (GlcNAc...) asparagine glycan.

In terms of tissue distribution, salivary gland (at protein level). Adult midgut.

Its subcellular location is the secreted. In terms of biological role, inhibits host coagulation by delaying thrombin generation and reducing endogenous thrombin potential (ETP). The protein is Salivary anticoagulant protein P23 of Ixodes scapularis (Black-legged tick).